A 100-amino-acid chain; its full sequence is Large ribosomal subunit protein uL23 (100 aa).

This sequence belongs to the universal ribosomal protein uL23 family. Part of the 50S ribosomal subunit. Contacts protein L29, and trigger factor when it is bound to the ribosome.

Functionally, one of the early assembly proteins it binds 23S rRNA. One of the proteins that surrounds the polypeptide exit tunnel on the outside of the ribosome. Forms the main docking site for trigger factor binding to the ribosome. The sequence is that of Large ribosomal subunit protein uL23 from Pasteurella multocida (strain Pm70).